Here is a 258-residue protein sequence, read N- to C-terminus: tRNA pseudouridine synthase A (258 aa).

D52 (nucleophile) is an active-site residue. Y110 lines the substrate pocket.

It belongs to the tRNA pseudouridine synthase TruA family. As to quaternary structure, homodimer.

It catalyses the reaction uridine(38/39/40) in tRNA = pseudouridine(38/39/40) in tRNA. Formation of pseudouridine at positions 38, 39 and 40 in the anticodon stem and loop of transfer RNAs. This is tRNA pseudouridine synthase A from Francisella tularensis subsp. novicida (strain U112).